The chain runs to 471 residues: Probable ribonuclease FAU-1 (471 aa).

Belongs to the FAU-1 family.

Its function is as follows. Probable RNase involved in rRNA stability through maturation and/or degradation of precursor rRNAs. Preferentially cleaves UA sequences in the 5' precursor region of 5S rRNA. Binds to RNA in loop regions with AU-rich sequences. This Thermococcus kodakarensis (strain ATCC BAA-918 / JCM 12380 / KOD1) (Pyrococcus kodakaraensis (strain KOD1)) protein is Probable ribonuclease FAU-1.